Consider the following 146-residue polypeptide: Hemoglobin subunit beta (146 aa).

Position 1 is an N-acetylvaline (Val1). The 145-residue stretch at 2-146 folds into the Globin domain; it reads HLTPEEKTAV…VANALAHKYH (145 aa). Thr12 is modified (phosphothreonine). At Ser44 the chain carries Phosphoserine. Residue Lys59 is modified to N6-acetyllysine. Position 63 (His63) interacts with heme b. Position 82 is an N6-acetyllysine (Lys82). His92 is a heme b binding site. S-nitrosocysteine is present on Cys93. Residue Lys144 is modified to N6-acetyllysine.

This sequence belongs to the globin family. Heterotetramer of two alpha chains and two beta chains. In terms of tissue distribution, red blood cells.

Involved in oxygen transport from the lung to the various peripheral tissues. This Mandrillus sphinx (Mandrill) protein is Hemoglobin subunit beta (HBB).